The primary structure comprises 1039 residues: Pleckstrin homology domain-containing family G member 5 (1039 aa).

Disordered regions lie at residues 58-105 (NVST…RRHT) and 185-277 (PGDE…SSES). Composition is skewed to basic and acidic residues over residues 185–199 (PGDEGKVEQGVKDSK) and 217–228 (ERVDPQSRRESS). Low complexity predominate over residues 259–277 (SSCSLPVGSSVGSSGSSES). The DH domain maps to 372 to 564 (HQQEAVWELL…ERFIHHVNTC (193 aa)). The PH domain occupies 620–720 (QLLLEGSLRM…WVDTLYNAQN (101 aa)). 2 disordered regions span residues 739–785 (QHLQ…ASDG) and 800–836 (TLSSPEFDRGPFSSQSDEASLSNTTSSITPTSELLPL). Residues 744–757 (LEEEEDEQEEEGEE) are compositionally biased toward acidic residues. Composition is skewed to polar residues over residues 758–776 (SGTSAASSPTILRKSSNSL) and 811–831 (FSSQSDEASLSNTTSSITPTS). The residue at position 760 (threonine 760) is a Phosphothreonine. Serine 765 carries the post-translational modification Phosphoserine. Threonine 876 carries the post-translational modification Phosphothreonine. A phosphoserine mark is found at serine 878, serine 903, and serine 908. The segment at 967 to 989 (PLSESENRPSHKAGGPADSARRK) is disordered.

As to quaternary structure, interacts with GIPC1/synectin and RHOA. As to expression, selectively expressed in cortical and hippocampal neurons with prominent expression in the cell bodies and dendrites. Weakly expressed in rat fad pad ECs (RFPECs).

It is found in the cytoplasm. It localises to the perinuclear region. Its subcellular location is the cell membrane. The protein localises to the cell junction. The protein resides in the cell projection. It is found in the lamellipodium. Functions as a guanine exchange factor (GEF) for RAB26 and thus regulates autophagy of synaptic vesicles in axon terminal of motoneurons. Involved in the control of neuronal cell differentiation. Plays a role in angiogenesis through regulation of endothelial cells chemotaxis. Also affects the migration, adhesion, and matrix/bone degradation in macrophages and osteoclasts. The chain is Pleckstrin homology domain-containing family G member 5 (Plekhg5) from Rattus norvegicus (Rat).